The chain runs to 122 residues: MIQMQTSLEAADNSGARRLVCIKVLGGSQRRYAGIGDIIKVAVKEAIPRGKVKKGEVYNALIVRTRKGVRRADGSLIRFDNNAVVLLNNQLQPIGTRIFGPVTRELRVENFMRIVSLAPEVL.

The protein belongs to the universal ribosomal protein uL14 family. Part of the 50S ribosomal subunit. Forms a cluster with proteins L3 and L19. In the 70S ribosome, L14 and L19 interact and together make contacts with the 16S rRNA in bridges B5 and B8.

In terms of biological role, binds to 23S rRNA. Forms part of two intersubunit bridges in the 70S ribosome. This Nitrosococcus oceani (strain ATCC 19707 / BCRC 17464 / JCM 30415 / NCIMB 11848 / C-107) protein is Large ribosomal subunit protein uL14.